Consider the following 790-residue polypeptide: Polyribonucleotide nucleotidyltransferase (790 aa).

Positions 498 and 504 each coordinate Mg(2+). Positions 565 to 624 (PRILRIKIKPEQIGEVIGPGGRVIRAIQEQTGTKISIEEDGTVFISAANEDAARRAVREI) constitute a KH domain. Residues 634–702 (GEIFYGRVVT…PDGKINLSRK (69 aa)) form the S1 motif domain. The segment at 710–790 (AERAATAQAP…KELLGEDEPN (81 aa)) is disordered. Basic and acidic residues predominate over residues 739-755 (PERRPGPPTPRRPEQRG). Pro residues predominate over residues 757–772 (SRPPRPQAQRSTPPPG).

It belongs to the polyribonucleotide nucleotidyltransferase family. Mg(2+) serves as cofactor.

Its subcellular location is the cytoplasm. The enzyme catalyses RNA(n+1) + phosphate = RNA(n) + a ribonucleoside 5'-diphosphate. Involved in mRNA degradation. Catalyzes the phosphorolysis of single-stranded polyribonucleotides processively in the 3'- to 5'-direction. The protein is Polyribonucleotide nucleotidyltransferase of Thermomicrobium roseum (strain ATCC 27502 / DSM 5159 / P-2).